Here is a 98-residue protein sequence, read N- to C-terminus: NADH-ubiquinone oxidoreductase chain 4L (98 aa).

The next 3 membrane-spanning stretches (helical) occupy residues 2 to 22 (PSIS…MLIF), 29 to 49 (SLLC…LTIL), and 61 to 81 (ILLL…LVTV).

It belongs to the complex I subunit 4L family. As to quaternary structure, core subunit of respiratory chain NADH dehydrogenase (Complex I) which is composed of 45 different subunits.

The protein resides in the mitochondrion inner membrane. It catalyses the reaction a ubiquinone + NADH + 5 H(+)(in) = a ubiquinol + NAD(+) + 4 H(+)(out). Its function is as follows. Core subunit of the mitochondrial membrane respiratory chain NADH dehydrogenase (Complex I) which catalyzes electron transfer from NADH through the respiratory chain, using ubiquinone as an electron acceptor. Part of the enzyme membrane arm which is embedded in the lipid bilayer and involved in proton translocation. The chain is NADH-ubiquinone oxidoreductase chain 4L (MT-ND4L) from Eulemur rubriventer (Red-bellied lemur).